We begin with the raw amino-acid sequence, 212 residues long: Imidazole glycerol phosphate synthase subunit HisH (212 aa).

Residues 3-212 (SIAVVDYGMG…LLSNFLKWTP (210 aa)) enclose the Glutamine amidotransferase type-1 domain. The Nucleophile role is filled by C82. Catalysis depends on residues H192 and E194.

In terms of assembly, heterodimer of HisH and HisF.

The protein resides in the cytoplasm. The enzyme catalyses 5-[(5-phospho-1-deoxy-D-ribulos-1-ylimino)methylamino]-1-(5-phospho-beta-D-ribosyl)imidazole-4-carboxamide + L-glutamine = D-erythro-1-(imidazol-4-yl)glycerol 3-phosphate + 5-amino-1-(5-phospho-beta-D-ribosyl)imidazole-4-carboxamide + L-glutamate + H(+). It carries out the reaction L-glutamine + H2O = L-glutamate + NH4(+). The protein operates within amino-acid biosynthesis; L-histidine biosynthesis; L-histidine from 5-phospho-alpha-D-ribose 1-diphosphate: step 5/9. Functionally, IGPS catalyzes the conversion of PRFAR and glutamine to IGP, AICAR and glutamate. The HisH subunit catalyzes the hydrolysis of glutamine to glutamate and ammonia as part of the synthesis of IGP and AICAR. The resulting ammonia molecule is channeled to the active site of HisF. This is Imidazole glycerol phosphate synthase subunit HisH from Nitrosomonas europaea (strain ATCC 19718 / CIP 103999 / KCTC 2705 / NBRC 14298).